The primary structure comprises 117 residues: Large ribosomal subunit protein bL19 (117 aa).

It belongs to the bacterial ribosomal protein bL19 family.

Its function is as follows. This protein is located at the 30S-50S ribosomal subunit interface and may play a role in the structure and function of the aminoacyl-tRNA binding site. The polypeptide is Large ribosomal subunit protein bL19 (Alkaliphilus metalliredigens (strain QYMF)).